A 101-amino-acid chain; its full sequence is NAD(P)H-quinone oxidoreductase subunit 4L, chloroplastic (101 aa).

A run of 3 helical transmembrane segments spans residues 2 to 22 (MLEHVLFLSAYLFSIGIFGLI), 32 to 52 (MCLELILNAVNLNLVTFSHLF), and 61 to 81 (IFSIFVITIAAAEAAIGLAIV).

Belongs to the complex I subunit 4L family. In terms of assembly, NDH is composed of at least 16 different subunits, 5 of which are encoded in the nucleus.

It is found in the plastid. The protein localises to the chloroplast thylakoid membrane. It catalyses the reaction a plastoquinone + NADH + (n+1) H(+)(in) = a plastoquinol + NAD(+) + n H(+)(out). The catalysed reaction is a plastoquinone + NADPH + (n+1) H(+)(in) = a plastoquinol + NADP(+) + n H(+)(out). Functionally, NDH shuttles electrons from NAD(P)H:plastoquinone, via FMN and iron-sulfur (Fe-S) centers, to quinones in the photosynthetic chain and possibly in a chloroplast respiratory chain. The immediate electron acceptor for the enzyme in this species is believed to be plastoquinone. Couples the redox reaction to proton translocation, and thus conserves the redox energy in a proton gradient. The polypeptide is NAD(P)H-quinone oxidoreductase subunit 4L, chloroplastic (Piper cenocladum (Ant piper)).